Consider the following 561-residue polypeptide: Small ribosomal subunit protein bS1 (561 aa).

6 consecutive S1 motif domains span residues 22-88 (GEVI…LSRE), 106-172 (GDIL…VSRR), 193-261 (GSVI…LGMK), 278-348 (GTRL…LGMK), 365-435 (GDKI…LGIK), and 452-521 (GSLV…LSVK).

It belongs to the bacterial ribosomal protein bS1 family.

Binds mRNA; thus facilitating recognition of the initiation point. It is needed to translate mRNA with a short Shine-Dalgarno (SD) purine-rich sequence. This is Small ribosomal subunit protein bS1 (rpsA) from Neisseria meningitidis serogroup B (strain ATCC BAA-335 / MC58).